The sequence spans 257 residues: MEPLVIKLGGVLLDNEEALERVFTALQEYRQTHERQLVVVHGGGYLVDELMEKLQLPIVKEQGLRVTPADQIGIITGALAGIANKTLLSWATKYQLASVGLYLGDGNVVTVSQLSEELGHVGKAMPGDAKLLKTLLDAGYMPIISSIGVTDKGELMNVNADQAATAIAQTLGADLVLLSDVSGILDGKGQKIPDINVEKAEQLIAHGIITDGMIVKVNAALDAARTLDRPVDIASWRHADQLTDLFNGVPVGTRILA.

Residues 43-44 (GG), Arg-65, and Asn-157 contribute to the substrate site. Residues 180–185 (DVSGIL) and 208–210 (IIT) contribute to the ATP site.

It belongs to the acetylglutamate kinase family. ArgB subfamily. Homodimer.

It is found in the cytoplasm. It carries out the reaction N-acetyl-L-glutamate + ATP = N-acetyl-L-glutamyl 5-phosphate + ADP. Its pathway is amino-acid biosynthesis; L-arginine biosynthesis; N(2)-acetyl-L-ornithine from L-glutamate: step 2/4. In terms of biological role, catalyzes the ATP-dependent phosphorylation of N-acetyl-L-glutamate. The chain is Acetylglutamate kinase from Photorhabdus laumondii subsp. laumondii (strain DSM 15139 / CIP 105565 / TT01) (Photorhabdus luminescens subsp. laumondii).